We begin with the raw amino-acid sequence, 276 residues long: TCP pilus virulence regulatory protein (276 aa).

The 98-residue stretch at 172–269 (EKISCLVKSD…NVAPSEYLFM (98 aa)) folds into the HTH araC/xylS-type domain. 2 DNA-binding regions (H-T-H motif) span residues 189-210 (ADIC…ESRG) and 236-259 (IKQI…KSTM).

It is found in the cytoplasm. In terms of biological role, probable regulatory protein for the tcp operon. In Vibrio cholerae serotype O1 (strain ATCC 39541 / Classical Ogawa 395 / O395), this protein is TCP pilus virulence regulatory protein (tcpN).